Consider the following 259-residue polypeptide: Global transcriptional regulator CodY (259 aa).

The interval 1-155 (MELLAKTRKL…SATVVGMEIL (155 aa)) is GAF domain. The H-T-H motif DNA-binding region spans 203 to 222 (ASKIADRVGITRSVIVNALR). At serine 215 the chain carries Phosphoserine.

It belongs to the CodY family.

Its subcellular location is the cytoplasm. Its function is as follows. DNA-binding global transcriptional regulator which is involved in the adaptive response to starvation and acts by directly or indirectly controlling the expression of numerous genes in response to nutrient availability. During rapid exponential growth, CodY is highly active and represses genes whose products allow adaptation to nutrient depletion. The sequence is that of Global transcriptional regulator CodY from Bacillus cytotoxicus (strain DSM 22905 / CIP 110041 / 391-98 / NVH 391-98).